We begin with the raw amino-acid sequence, 102 residues long: U3-aranetoxin-Ce1a (102 aa).

The signal sequence occupies residues 1 to 21 (MKHLSIFFVFFCCICVMLCDA).

Belongs to the neurotoxin 20 family. Expressed by the venom gland.

Its subcellular location is the secreted. The protein is U3-aranetoxin-Ce1a of Caerostris extrusa (Bark spider).